Consider the following 82-residue polypeptide: Exodeoxyribonuclease 7 small subunit (82 aa).

It belongs to the XseB family. Heterooligomer composed of large and small subunits.

The protein resides in the cytoplasm. It carries out the reaction Exonucleolytic cleavage in either 5'- to 3'- or 3'- to 5'-direction to yield nucleoside 5'-phosphates.. Bidirectionally degrades single-stranded DNA into large acid-insoluble oligonucleotides, which are then degraded further into small acid-soluble oligonucleotides. This chain is Exodeoxyribonuclease 7 small subunit, found in Sodalis glossinidius (strain morsitans).